The primary structure comprises 1138 residues: Eukaryotic translation initiation factor 3 subunit A (1138 aa).

The PCI domain maps to L319 to T502. 2 disordered regions span residues N590 to Q633 and E817 to R1138. 4 stretches are compositionally biased toward basic and acidic residues: residues E817–R903, D923–D967, G1003–Q1049, and D1058–R1078. Residues P1082–N1100 are compositionally biased toward gly residues. A compositionally biased stretch (basic and acidic residues) spans P1107 to D1128.

This sequence belongs to the eIF-3 subunit A family. Component of the eukaryotic translation initiation factor 3 (eIF-3) complex. The eIF-3 complex interacts with pix.

It localises to the cytoplasm. In terms of biological role, RNA-binding component of the eukaryotic translation initiation factor 3 (eIF-3) complex, which is involved in protein synthesis of a specialized repertoire of mRNAs and, together with other initiation factors, stimulates binding of mRNA and methionyl-tRNAi to the 40S ribosome. The eIF-3 complex specifically targets and initiates translation of a subset of mRNAs involved in cell proliferation. In Drosophila virilis (Fruit fly), this protein is Eukaryotic translation initiation factor 3 subunit A.